A 237-amino-acid chain; its full sequence is Ribose-5-phosphate isomerase A (237 aa).

Residues 32–35 (TGRT), 85–88 (DGAD), and 99–102 (KGGG) contribute to the substrate site. Catalysis depends on glutamate 108, which acts as the Proton acceptor. Arginine 126 serves as a coordination point for substrate.

It belongs to the ribose 5-phosphate isomerase family. In terms of assembly, homodimer.

It catalyses the reaction aldehydo-D-ribose 5-phosphate = D-ribulose 5-phosphate. Its pathway is carbohydrate degradation; pentose phosphate pathway; D-ribose 5-phosphate from D-ribulose 5-phosphate (non-oxidative stage): step 1/1. Functionally, catalyzes the reversible conversion of ribose-5-phosphate to ribulose 5-phosphate. The protein is Ribose-5-phosphate isomerase A of Aeropyrum pernix (strain ATCC 700893 / DSM 11879 / JCM 9820 / NBRC 100138 / K1).